The sequence spans 301 residues: Glutathione transport system permease protein GsiD (301 aa).

6 consecutive transmembrane segments (helical) span residues V37–Y57, L103–L123, V141–G161, M162–R182, I220–F240, and V264–F284. In terms of domain architecture, ABC transmembrane type-1 spans T99 to G288.

The protein belongs to the binding-protein-dependent transport system permease family. As to quaternary structure, the complex is composed of two ATP-binding proteins (GsiA), two transmembrane proteins (GsiC and GsiD) and a solute-binding protein (GsiB).

The protein resides in the cell inner membrane. In terms of biological role, part of the ABC transporter complex GsiABCD involved in glutathione import. Probably responsible for the translocation of the substrate across the membrane. The protein is Glutathione transport system permease protein GsiD of Pectobacterium atrosepticum (strain SCRI 1043 / ATCC BAA-672) (Erwinia carotovora subsp. atroseptica).